The primary structure comprises 34 residues: Photosystem II reaction center protein M (34 aa).

Residues 5–25 (ILAFIATALFILIPTAFLLII) form a helical membrane-spanning segment.

It belongs to the PsbM family. PSII is composed of 1 copy each of membrane proteins PsbA, PsbB, PsbC, PsbD, PsbE, PsbF, PsbH, PsbI, PsbJ, PsbK, PsbL, PsbM, PsbT, PsbX, PsbY, PsbZ, Psb30/Ycf12, at least 3 peripheral proteins of the oxygen-evolving complex and a large number of cofactors. It forms dimeric complexes.

It localises to the plastid. It is found in the chloroplast thylakoid membrane. In terms of biological role, one of the components of the core complex of photosystem II (PSII). PSII is a light-driven water:plastoquinone oxidoreductase that uses light energy to abstract electrons from H(2)O, generating O(2) and a proton gradient subsequently used for ATP formation. It consists of a core antenna complex that captures photons, and an electron transfer chain that converts photonic excitation into a charge separation. This subunit is found at the monomer-monomer interface. In Agrostis stolonifera (Creeping bentgrass), this protein is Photosystem II reaction center protein M.